Consider the following 273-residue polypeptide: Putative phosphoenolpyruvate synthase regulatory protein (273 aa).

154-161 (GVSRSGKT) contacts ADP.

Belongs to the pyruvate, phosphate/water dikinase regulatory protein family. PSRP subfamily.

It catalyses the reaction [pyruvate, water dikinase] + ADP = [pyruvate, water dikinase]-phosphate + AMP + H(+). The enzyme catalyses [pyruvate, water dikinase]-phosphate + phosphate + H(+) = [pyruvate, water dikinase] + diphosphate. Its function is as follows. Bifunctional serine/threonine kinase and phosphorylase involved in the regulation of the phosphoenolpyruvate synthase (PEPS) by catalyzing its phosphorylation/dephosphorylation. This Neisseria gonorrhoeae (strain ATCC 700825 / FA 1090) protein is Putative phosphoenolpyruvate synthase regulatory protein.